The chain runs to 91 residues: Small ribosomal subunit protein uS19 (91 aa).

It belongs to the universal ribosomal protein uS19 family.

Protein S19 forms a complex with S13 that binds strongly to the 16S ribosomal RNA. The chain is Small ribosomal subunit protein uS19 from Synechococcus sp. (strain CC9605).